The chain runs to 459 residues: NADP-specific glutamate dehydrogenase (459 aa).

Residue K114 is part of the active site.

The protein belongs to the Glu/Leu/Phe/Val dehydrogenases family. In terms of assembly, homohexamer.

It carries out the reaction L-glutamate + NADP(+) + H2O = 2-oxoglutarate + NH4(+) + NADPH + H(+). This Emericella nidulans (strain FGSC A4 / ATCC 38163 / CBS 112.46 / NRRL 194 / M139) (Aspergillus nidulans) protein is NADP-specific glutamate dehydrogenase (gdhA).